The chain runs to 204 residues: MEQSMSSEQAERVAGRVEQLGGFQNNESINQRALLLLQRNRQRRQLLQRQEDRTRYIPDDAKRRVVERVAEPAAAESRADGAREEERAARPARPRETRRIAKKPQRYRPSDVALQEIRRYQRSTELLISRMPFARLVKEVTDQFTTVDQQMRWQSMAILALQEASEAYIVGLLEHTNLLALHAKRVTVMRKDMQLARRIRGQFI.

The interval R68–Y107 is disordered. Residues S77–R99 are compositionally biased toward basic and acidic residues. The interval A89–Q202 is H3-like.

This sequence belongs to the histone H3 family. Component of centromeric nucleosomes, where DNA is wrapped around a histone octamer core. The octamer contains two molecules each of H2A, H2B, CSE4/CENPA and H4 assembled in one CSE4-H4 heterotetramer and two H2A-H2B heterodimers. Interacts with the inner kinetochore. In terms of processing, ubiquitinated. Is degraded through ubiquitin-mediated proteolysis when not protected by its association to the kinetochore.

Its subcellular location is the nucleus. The protein resides in the chromosome. It localises to the centromere. Its function is as follows. Histone H3-like nucleosomal protein that is specifically found in centromeric nucleosomes. Replaces conventional H3 in the nucleosome core of centromeric chromatin that serves as an assembly site for the inner kinetochore. Required for recruitment and assembly of kinetochore proteins, mitotic progression and chromosome segregation. May serve as an epigenetic mark that propagates centromere identity through replication and cell division. This is Histone H3-like centromeric protein CSE4 (CSE4) from Eremothecium gossypii (strain ATCC 10895 / CBS 109.51 / FGSC 9923 / NRRL Y-1056) (Yeast).